A 483-amino-acid chain; its full sequence is Rhamnulokinase (483 aa).

11-15 is an ATP binding site; sequence ASSGR. Residues glycine 79 and 234–236 each bind substrate; that span reads HDT. The active-site Proton acceptor is aspartate 235. Threonine 257 is a binding site for ATP. Asparagine 294 serves as a coordination point for substrate. Position 302 (glutamine 302) interacts with ATP. Cysteine 352 and cysteine 369 are oxidised to a cystine. ATP is bound at residue glycine 401.

It belongs to the rhamnulokinase family. Requires Mg(2+) as cofactor.

The catalysed reaction is L-rhamnulose + ATP = L-rhamnulose 1-phosphate + ADP + H(+). Its pathway is carbohydrate degradation; L-rhamnose degradation; glycerone phosphate from L-rhamnose: step 2/3. In terms of biological role, involved in the catabolism of L-rhamnose (6-deoxy-L-mannose). Catalyzes the transfer of the gamma-phosphate group from ATP to the 1-hydroxyl group of L-rhamnulose to yield L-rhamnulose 1-phosphate. The protein is Rhamnulokinase of Listeria monocytogenes serovar 1/2a (strain ATCC BAA-679 / EGD-e).